A 258-amino-acid polypeptide reads, in one-letter code: Small ribosomal subunit protein mS40 (258 aa).

The N-terminal 35 residues, 1 to 35 (MAASVLNTVLRRLPMLSLFRGSHRVQVPLQTLCTK), are a transit peptide targeting the mitochondrion. 2 positions are modified to phosphoserine: S38 and S49. The interval 214-258 (SRLRRLYQGHLQEESGPPPESMPKMPPRTPAEASSTGQTGPQSAL) is disordered. Residues 229-242 (GPPPESMPKMPPRT) show a composition bias toward pro residues. Residues 245–258 (EASSTGQTGPQSAL) are compositionally biased toward polar residues.

It belongs to the bacterial ribosomal protein bS18 family. Mitochondrion-specific ribosomal protein mS40 subfamily. Component of the mitochondrial small ribosomal subunit (mt-SSU). Mature mammalian 55S mitochondrial ribosomes consist of a small (28S) and a large (39S) subunit. The 28S small subunit contains a 12S ribosomal RNA (12S mt-rRNA) and 30 different proteins. The 39S large subunit contains a 16S rRNA (16S mt-rRNA), a copy of mitochondrial valine transfer RNA (mt-tRNA(Val)), which plays an integral structural role, and 52 different proteins. mS40 has a zinc binding site.

The protein resides in the mitochondrion. The protein is Small ribosomal subunit protein mS40 (MRPS18B) of Homo sapiens (Human).